Consider the following 442-residue polypeptide: UDP-N-acetylmuramate--L-alanine ligase (442 aa).

109-115 serves as a coordination point for ATP; it reads GAHGKTS.

Belongs to the MurCDEF family.

The protein localises to the cytoplasm. It carries out the reaction UDP-N-acetyl-alpha-D-muramate + L-alanine + ATP = UDP-N-acetyl-alpha-D-muramoyl-L-alanine + ADP + phosphate + H(+). It participates in cell wall biogenesis; peptidoglycan biosynthesis. Functionally, cell wall formation. The polypeptide is UDP-N-acetylmuramate--L-alanine ligase (Streptococcus pyogenes serotype M18 (strain MGAS8232)).